The following is a 257-amino-acid chain: Imidazole glycerol phosphate synthase subunit HisF (257 aa).

Residues Asp12 and Asp131 contribute to the active site.

This sequence belongs to the HisA/HisF family. As to quaternary structure, heterodimer of HisH and HisF.

The protein localises to the cytoplasm. It catalyses the reaction 5-[(5-phospho-1-deoxy-D-ribulos-1-ylimino)methylamino]-1-(5-phospho-beta-D-ribosyl)imidazole-4-carboxamide + L-glutamine = D-erythro-1-(imidazol-4-yl)glycerol 3-phosphate + 5-amino-1-(5-phospho-beta-D-ribosyl)imidazole-4-carboxamide + L-glutamate + H(+). It functions in the pathway amino-acid biosynthesis; L-histidine biosynthesis; L-histidine from 5-phospho-alpha-D-ribose 1-diphosphate: step 5/9. In terms of biological role, IGPS catalyzes the conversion of PRFAR and glutamine to IGP, AICAR and glutamate. The HisF subunit catalyzes the cyclization activity that produces IGP and AICAR from PRFAR using the ammonia provided by the HisH subunit. This Kineococcus radiotolerans (strain ATCC BAA-149 / DSM 14245 / SRS30216) protein is Imidazole glycerol phosphate synthase subunit HisF.